An 82-amino-acid chain; its full sequence is Small ribosomal subunit protein bS16 (82 aa).

Belongs to the bacterial ribosomal protein bS16 family.

This Shewanella sp. (strain ANA-3) protein is Small ribosomal subunit protein bS16.